A 539-amino-acid chain; its full sequence is Chaperonin GroEL 1 (539 aa).

ATP-binding positions include 30 to 33 (TLGP), Lys-51, 87 to 91 (DGTTT), Gly-415, 480 to 482 (NAA), and Asp-496.

The protein belongs to the chaperonin (HSP60) family. Forms a cylinder of 14 subunits composed of two heptameric rings stacked back-to-back. Interacts with the co-chaperonin GroES.

The protein resides in the cytoplasm. The enzyme catalyses ATP + H2O + a folded polypeptide = ADP + phosphate + an unfolded polypeptide.. Together with its co-chaperonin GroES, plays an essential role in assisting protein folding. The GroEL-GroES system forms a nano-cage that allows encapsulation of the non-native substrate proteins and provides a physical environment optimized to promote and accelerate protein folding. This Bradyrhizobium sp. (strain ORS 278) protein is Chaperonin GroEL 1.